Consider the following 174-residue polypeptide: Ribosome maturation factor RimM (174 aa).

Residues 96–169 (EPDTYYDHQL…ILEIDPPDGL (74 aa)) enclose the PRC barrel domain.

Belongs to the RimM family. As to quaternary structure, binds ribosomal protein uS19.

It localises to the cytoplasm. In terms of biological role, an accessory protein needed during the final step in the assembly of 30S ribosomal subunit, possibly for assembly of the head region. Essential for efficient processing of 16S rRNA. May be needed both before and after RbfA during the maturation of 16S rRNA. It has affinity for free ribosomal 30S subunits but not for 70S ribosomes. The chain is Ribosome maturation factor RimM from Mycobacterium marinum (strain ATCC BAA-535 / M).